The chain runs to 145 residues: Ribonuclease H (145 aa).

Positions Met-1–Ala-141 constitute an RNase H type-1 domain. Mg(2+)-binding residues include Asp-9, Glu-47, Asp-69, and Asp-133.

It belongs to the RNase H family. As to quaternary structure, monomer. It depends on Mg(2+) as a cofactor.

The protein resides in the cytoplasm. It carries out the reaction Endonucleolytic cleavage to 5'-phosphomonoester.. Endonuclease that specifically degrades the RNA of RNA-DNA hybrids. The protein is Ribonuclease H of Cupriavidus pinatubonensis (strain JMP 134 / LMG 1197) (Cupriavidus necator (strain JMP 134)).